A 75-amino-acid polypeptide reads, in one-letter code: Toxin-like peptide AaF1CA7 (75 aa).

Positions 1-22 (MMKLMLFSIIVILFSLIGSIHG) are cleaved as a signal peptide. The LCN-type CS-alpha/beta domain maps to 25–75 (VPGNYPLDSSDDTYLCAPLGENPSCIQICRKHGVKYGYCYAFQCWCEYFGR). 3 disulfide bridges follow: C40–C63, C49–C68, and C53–C70.

Belongs to the long (3 C-C) scorpion toxin superfamily. In terms of tissue distribution, expressed by the venom gland.

Its subcellular location is the secreted. Its function is as follows. Probable neurotoxin that inhibits ion channels. The chain is Toxin-like peptide AaF1CA7 from Androctonus australis (Sahara scorpion).